Here is a 317-residue protein sequence, read N- to C-terminus: SURF1-like protein (317 aa).

Transmembrane regions (helical) follow at residues 78–98 (GSILMLGLPAFAFSLGVWQIY) and 293–313 (HMNYLTTWFTLTLVTMLMWIH).

Belongs to the SURF1 family.

The protein resides in the mitochondrion inner membrane. Probably involved in the biogenesis of the COX complex. This is SURF1-like protein (sft-1) from Caenorhabditis briggsae.